The sequence spans 81 residues: Acyl carrier protein (81 aa).

Residues 4-79 (SEIFGKVKDI…AAVDFIAGKV (76 aa)) enclose the Carrier domain. S39 is subject to O-(pantetheine 4'-phosphoryl)serine.

Belongs to the acyl carrier protein (ACP) family. In terms of processing, 4'-phosphopantetheine is transferred from CoA to a specific serine of apo-ACP by AcpS. This modification is essential for activity because fatty acids are bound in thioester linkage to the sulfhydryl of the prosthetic group.

The protein resides in the cytoplasm. It participates in lipid metabolism; fatty acid biosynthesis. Functionally, carrier of the growing fatty acid chain in fatty acid biosynthesis. This chain is Acyl carrier protein, found in Acaryochloris marina (strain MBIC 11017).